The following is a 446-amino-acid chain: Chromosomal replication initiator protein DnaA (446 aa).

The tract at residues 1–72 (MENILDLWNK…ADTIYELTGE (72 aa)) is domain I, interacts with DnaA modulators. The interval 72–109 (EELSIKFIIPQNQDEVEAMPKSPIKKMSKEDPVDIPQN) is domain II. Positions 110–326 (MLNPKYTFDT…GALIRVVAYS (217 aa)) are domain III, AAA+ region. ATP-binding residues include G154, G156, K157, and T158. Residues 327–446 (SLINKDINAD…HVKEIKEQLK (120 aa)) are domain IV, binds dsDNA.

This sequence belongs to the DnaA family. As to quaternary structure, oligomerizes as a right-handed, spiral filament on DNA at oriC.

The protein localises to the cytoplasm. Plays an essential role in the initiation and regulation of chromosomal replication. ATP-DnaA binds to the origin of replication (oriC) to initiate formation of the DNA replication initiation complex once per cell cycle. Binds the DnaA box (a 9 base pair repeat at the origin) and separates the double-stranded (ds)DNA. Forms a right-handed helical filament on oriC DNA; dsDNA binds to the exterior of the filament while single-stranded (ss)DNA is stabiized in the filament's interior. The ATP-DnaA-oriC complex binds and stabilizes one strand of the AT-rich DNA unwinding element (DUE), permitting loading of DNA polymerase. After initiation quickly degrades to an ADP-DnaA complex that is not apt for DNA replication. Binds acidic phospholipids. The chain is Chromosomal replication initiator protein DnaA from Bacillus pumilus (strain SAFR-032).